The primary structure comprises 402 residues: Tryptophan synthase beta chain (402 aa).

K91 is subject to N6-(pyridoxal phosphate)lysine.

Belongs to the TrpB family. As to quaternary structure, tetramer of two alpha and two beta chains. Pyridoxal 5'-phosphate serves as cofactor.

The catalysed reaction is (1S,2R)-1-C-(indol-3-yl)glycerol 3-phosphate + L-serine = D-glyceraldehyde 3-phosphate + L-tryptophan + H2O. Its pathway is amino-acid biosynthesis; L-tryptophan biosynthesis; L-tryptophan from chorismate: step 5/5. The beta subunit is responsible for the synthesis of L-tryptophan from indole and L-serine. The sequence is that of Tryptophan synthase beta chain from Streptococcus thermophilus (strain ATCC BAA-250 / LMG 18311).